Here is a 1111-residue protein sequence, read N- to C-terminus: RecBCD enzyme subunit RecC (1111 aa).

Belongs to the RecC family. As to quaternary structure, heterotrimer of RecB, RecC and RecD. All subunits contribute to DNA-binding.

Its function is as follows. A helicase/nuclease that prepares dsDNA breaks (DSB) for recombinational DNA repair. Binds to DSBs and unwinds DNA via a highly rapid and processive ATP-dependent bidirectional helicase activity. Unwinds dsDNA until it encounters a Chi (crossover hotspot instigator) sequence from the 3' direction. Cuts ssDNA a few nucleotides 3' to the Chi site. The properties and activities of the enzyme are changed at Chi. The Chi-altered holoenzyme produces a long 3'-ssDNA overhang and facilitates RecA-binding to the ssDNA for homologous DNA recombination and repair. Holoenzyme degrades any linearized DNA that is unable to undergo homologous recombination. In the holoenzyme this subunit recognizes the wild-type Chi sequence, and when added to isolated RecB increases its ATP-dependent helicase processivity. The polypeptide is RecBCD enzyme subunit RecC (Buchnera aphidicola subsp. Baizongia pistaciae (strain Bp)).